A 233-amino-acid polypeptide reads, in one-letter code: Adenosine 5'-phosphosulfate reductase (233 aa).

[4Fe-4S] cluster contacts are provided by C120, C121, C203, and C206. C229 serves as the catalytic Nucleophile; cysteine thiosulfonate intermediate.

Belongs to the PAPS reductase family. CysH subfamily. The cofactor is [4Fe-4S] cluster.

The protein localises to the cytoplasm. It carries out the reaction [thioredoxin]-disulfide + sulfite + AMP + 2 H(+) = adenosine 5'-phosphosulfate + [thioredoxin]-dithiol. It participates in sulfur metabolism; hydrogen sulfide biosynthesis; sulfite from sulfate. In terms of biological role, catalyzes the formation of sulfite from adenosine 5'-phosphosulfate (APS) using thioredoxin as an electron donor. The polypeptide is Adenosine 5'-phosphosulfate reductase (Bacillus pumilus (strain SAFR-032)).